Here is a 258-residue protein sequence, read N- to C-terminus: Acetylglutamate kinase (258 aa).

Residues Gly-44–Gly-45, Arg-66, and Asn-158 contribute to the substrate site. Residues Asp-181 to Leu-186 and Ile-209 to Thr-211 contribute to the ATP site.

It belongs to the acetylglutamate kinase family. ArgB subfamily. In terms of assembly, homodimer.

It is found in the cytoplasm. It carries out the reaction N-acetyl-L-glutamate + ATP = N-acetyl-L-glutamyl 5-phosphate + ADP. It participates in amino-acid biosynthesis; L-arginine biosynthesis; N(2)-acetyl-L-ornithine from L-glutamate: step 2/4. In terms of biological role, catalyzes the ATP-dependent phosphorylation of N-acetyl-L-glutamate. The polypeptide is Acetylglutamate kinase (Shigella flexneri).